Here is a 992-residue protein sequence, read N- to C-terminus: Disks large-associated protein 4 (992 aa).

Over residues 1 to 20 the composition is skewed to basic and acidic residues; sequence MKGLGDSRPRHLSDSLDPPH. Disordered regions lie at residues 1–31 and 154–226; these read MKGL…DRNP and APSM…ASGL. Gly residues predominate over residues 162-171; the sequence is GKVGGNGGKK. Over residues 172–194 the composition is skewed to basic and acidic residues; that stretch reads GVLEDGKGRRAKSKERAKAGEPK. Residues 199–208 show a composition bias toward polar residues; sequence SNISGWWSSD. Serine 206 and serine 207 each carry phosphoserine. Residue arginine 290 is modified to Omega-N-methylarginine. Disordered regions lie at residues 342 to 435, 527 to 665, 677 to 751, 763 to 798, and 915 to 992; these read TTLL…SWEE, SVSL…RKLS, VPKE…GPRQ, SYGD…AQPG, and TPEK…QTRL. Residues serine 377, serine 380, serine 384, serine 388, serine 405, serine 415, and serine 421 each carry the phosphoserine modification. The span at 399–413 shows a compositional bias: polar residues; that stretch reads LRATQQSLGEQSNPR. A compositionally biased stretch (low complexity) spans 528–554; sequence VSLQSLSPPPSTGSLSNSRTLPSSSCL. Over residues 576–591 the composition is skewed to polar residues; the sequence is VTVQSSTESAQDTYLD. Residues serine 580, serine 581, serine 609, serine 611, serine 665, and serine 744 each carry the phosphoserine modification. Low complexity predominate over residues 600–620; sequence TSQSGLSNSSDSLDSSTRPPS. A Phosphothreonine modification is found at threonine 915. Composition is skewed to basic and acidic residues over residues 915–925 and 940–958; these read TPEKRKEEKKP and VSRD…EARK. Residues 969–978 are compositionally biased toward polar residues; sequence VRQNSATESA. Serine 973 carries the post-translational modification Phosphoserine.

It belongs to the SAPAP family. In terms of assembly, interacts with DLG1 and DLG4/PSD-95. In terms of tissue distribution, expressed in brain.

The protein localises to the membrane. Its function is as follows. May play a role in the molecular organization of synapses and neuronal cell signaling. Could be an adapter protein linking ion channel to the subsynaptic cytoskeleton. May induce enrichment of PSD-95/SAP90 at the plasma membrane. The protein is Disks large-associated protein 4 (Dlgap4) of Rattus norvegicus (Rat).